The following is a 157-amino-acid chain: Transmembrane protein 42 (157 aa).

4 helical membrane-spanning segments follow: residues 37-57 (FWGV…AAAA), 67-87 (IGLC…MWTF), 100-120 (IASV…GYLL), and 124-144 (CQEI…TLIH).

It localises to the membrane. In Mus musculus (Mouse), this protein is Transmembrane protein 42 (Tmem42).